The sequence spans 366 residues: MHHESPIRRRKTRQIHVGKVAIGGDAPISVQSMTNTETRDIAATVAQIRRLEAVGADIVRISVPSMDAAEAFKTIRAQVETPLVADIHFDHRIALQVMEDGVDGLRINPGNIGSLDKTRLVVEMAKDKGIPIRIGVNAGSLEKDIQEKYGEPTPEALVESALRHVSILDELNFHDVKISVKASDIFLAVSAYRLLSEKVDYPLHLGITEAGGLRSGTVKSAIGLGLLLRDGIGDTIRVSLAADPVEEIRVGFDILKSLHLRQKGINLIACPSCSRQEFDVITTINALEARLEDILEPMDVSVIGCVVNGIGEAKEADIGLAGGDKRSILYYRGKQVDRVENNDIVDVLEKRIRAEIAERQATRHEG.

[4Fe-4S] cluster is bound by residues Cys-270, Cys-273, Cys-305, and Glu-312.

This sequence belongs to the IspG family. It depends on [4Fe-4S] cluster as a cofactor.

It carries out the reaction (2E)-4-hydroxy-3-methylbut-2-enyl diphosphate + oxidized [flavodoxin] + H2O + 2 H(+) = 2-C-methyl-D-erythritol 2,4-cyclic diphosphate + reduced [flavodoxin]. It functions in the pathway isoprenoid biosynthesis; isopentenyl diphosphate biosynthesis via DXP pathway; isopentenyl diphosphate from 1-deoxy-D-xylulose 5-phosphate: step 5/6. Functionally, converts 2C-methyl-D-erythritol 2,4-cyclodiphosphate (ME-2,4cPP) into 1-hydroxy-2-methyl-2-(E)-butenyl 4-diphosphate. This chain is 4-hydroxy-3-methylbut-2-en-1-yl diphosphate synthase (flavodoxin), found in Acidithiobacillus ferrooxidans (strain ATCC 53993 / BNL-5-31) (Leptospirillum ferrooxidans (ATCC 53993)).